Reading from the N-terminus, the 728-residue chain is Catalase-peroxidase (728 aa).

The disordered stretch occupies residues 1 to 26; it reads MDNPTDTAGKCPVAHGNKPRGPSNRD. A cross-link (tryptophyl-tyrosyl-methioninium (Trp-Tyr) (with M-244)) is located at residues 96 to 218; the sequence is WHSAGTYRIT…LGAVQMGLIY (123 aa). Histidine 97 functions as the Proton acceptor in the catalytic mechanism. The segment at residues 218–244 is a cross-link (tryptophyl-tyrosyl-methioninium (Tyr-Met) (with W-96)); it reads YVNPEGPGGNPDPLASARDIRETFARM. Histidine 259 provides a ligand contact to heme b.

Belongs to the peroxidase family. Peroxidase/catalase subfamily. As to quaternary structure, homodimer or homotetramer. Heme b is required as a cofactor. Post-translationally, formation of the three residue Trp-Tyr-Met cross-link is important for the catalase, but not the peroxidase activity of the enzyme.

It carries out the reaction H2O2 + AH2 = A + 2 H2O. The catalysed reaction is 2 H2O2 = O2 + 2 H2O. In terms of biological role, bifunctional enzyme with both catalase and broad-spectrum peroxidase activity. The sequence is that of Catalase-peroxidase from Rhizobium etli (strain CIAT 652).